The sequence spans 786 residues: DNA double-strand break repair Rad50 ATPase (786 aa).

ATP-binding positions include Lys13, Asn33–Thr39, and Gln138. Coiled coils occupy residues Leu194–Ile249, Glu337–Glu455, and Ala551–Leu650. The 94-residue stretch at Glu366–Gly459 folds into the Zinc-hook domain. Zn(2+) is bound by residues Cys411 and Cys414.

It belongs to the SMC family. RAD50 subfamily. In terms of assembly, homodimer. Forms a heterotetramer composed of two Mre11 subunits and two Rad50 subunits. Zn(2+) serves as cofactor.

Its function is as follows. Part of the Rad50/Mre11 complex, which is involved in the early steps of DNA double-strand break (DSB) repair. The complex may facilitate opening of the processed DNA ends to aid in the recruitment of HerA and NurA. Rad50 controls the balance between DNA end bridging and DNA resection via ATP-dependent structural rearrangements of the Rad50/Mre11 complex. The chain is DNA double-strand break repair Rad50 ATPase from Nanoarchaeum equitans (strain Kin4-M).